The following is a 536-amino-acid chain: Bicoumarin synthase desC (536 aa).

Residues 12–32 (YVALAGITGFFLVFLGFLVVI) traverse the membrane as a helical segment. Asn-149 and Asn-371 each carry an N-linked (GlcNAc...) asparagine glycan. Position 480 (Cys-480) interacts with heme.

Belongs to the cytochrome P450 family. Requires heme as cofactor.

It is found in the membrane. It catalyses the reaction 2 7-demethylsiderin + NADPH + O2 = desertorin A + NADP(+) + 2 H2O. Its pathway is secondary metabolite biosynthesis. Non-reducing polyketide synthase; part of the gene cluster that mediates the biosynthesis of the bicoumarin desertorin. The non-reducing polyketide synthase desS first catalyzes the formation of the pentaketidic 4,7-dihydroxy-5-methylcoumarin from acetyl coenzyme A and 4 malonyl coenzyme A molecules. Further O-methylation by desB leads to the formation of 7-demethylsiderin. Then, an oxidative phenol coupling catalyzed by the cytochrome P450 monooxygenase desC forms the 6,8'-dimer M-desertorin A via dimerization the monomeric precursor, 7-demethylsiderin. M-desertorin A is further converted to M-desertorin C. The chain is Bicoumarin synthase desC from Aspergillus desertorum (Emericella desertorum).